The sequence spans 466 residues: Soluble pyridine nucleotide transhydrogenase (466 aa).

36–45 (ERYHNVGGGC) contributes to the FAD binding site.

This sequence belongs to the class-I pyridine nucleotide-disulfide oxidoreductase family. FAD is required as a cofactor.

The protein localises to the cytoplasm. It catalyses the reaction NAD(+) + NADPH = NADH + NADP(+). In terms of biological role, conversion of NADPH, generated by peripheral catabolic pathways, to NADH, which can enter the respiratory chain for energy generation. The sequence is that of Soluble pyridine nucleotide transhydrogenase from Salmonella paratyphi C (strain RKS4594).